The following is a 251-amino-acid chain: Triosephosphate isomerase (251 aa).

Substrate is bound at residue 9–11 (NWK). The active-site Electrophile is His95. Glu167 functions as the Proton acceptor in the catalytic mechanism. Substrate contacts are provided by residues Gly173, Ser212, and 233-234 (GG).

Belongs to the triosephosphate isomerase family. As to quaternary structure, homodimer.

It is found in the cytoplasm. It catalyses the reaction D-glyceraldehyde 3-phosphate = dihydroxyacetone phosphate. It functions in the pathway carbohydrate biosynthesis; gluconeogenesis. The protein operates within carbohydrate degradation; glycolysis; D-glyceraldehyde 3-phosphate from glycerone phosphate: step 1/1. Functionally, involved in the gluconeogenesis. Catalyzes stereospecifically the conversion of dihydroxyacetone phosphate (DHAP) to D-glyceraldehyde-3-phosphate (G3P). This is Triosephosphate isomerase from Pseudomonas putida (strain W619).